A 363-amino-acid polypeptide reads, in one-letter code: tRNA N6-adenosine threonylcarbamoyltransferase (363 aa).

Fe cation contacts are provided by H121 and H125. Residues 143–147 (LASGG), D176, G189, and N287 contribute to the substrate site. Residue D315 coordinates Fe cation.

Belongs to the KAE1 / TsaD family. Fe(2+) serves as cofactor.

It localises to the cytoplasm. It carries out the reaction L-threonylcarbamoyladenylate + adenosine(37) in tRNA = N(6)-L-threonylcarbamoyladenosine(37) in tRNA + AMP + H(+). Required for the formation of a threonylcarbamoyl group on adenosine at position 37 (t(6)A37) in tRNAs that read codons beginning with adenine. Is involved in the transfer of the threonylcarbamoyl moiety of threonylcarbamoyl-AMP (TC-AMP) to the N6 group of A37, together with TsaE and TsaB. TsaD likely plays a direct catalytic role in this reaction. The chain is tRNA N6-adenosine threonylcarbamoyltransferase from Rhodopseudomonas palustris (strain TIE-1).